The sequence spans 374 residues: Chorismate synthase (374 aa).

An NADP(+)-binding site is contributed by arginine 55. FMN-binding positions include 132-134, glycine 293, 308-312, and arginine 335; these read RGS and KPTPS.

The protein belongs to the chorismate synthase family. Requires FMNH2 as cofactor.

The catalysed reaction is 5-O-(1-carboxyvinyl)-3-phosphoshikimate = chorismate + phosphate. It participates in metabolic intermediate biosynthesis; chorismate biosynthesis; chorismate from D-erythrose 4-phosphate and phosphoenolpyruvate: step 7/7. Catalyzes the anti-1,4-elimination of the C-3 phosphate and the C-6 proR hydrogen from 5-enolpyruvylshikimate-3-phosphate (EPSP) to yield chorismate, which is the branch point compound that serves as the starting substrate for the three terminal pathways of aromatic amino acid biosynthesis. This reaction introduces a second double bond into the aromatic ring system. The polypeptide is Chorismate synthase (Methanothermobacter thermautotrophicus (strain ATCC 29096 / DSM 1053 / JCM 10044 / NBRC 100330 / Delta H) (Methanobacterium thermoautotrophicum)).